A 131-amino-acid polypeptide reads, in one-letter code: Small ribosomal subunit protein bS16 (131 aa).

Basic and acidic residues predominate over residues 87-117 (IGKSKQEELRKSEAKTSAKNKKANEEKANEE). Residues 87–131 (IGKSKQEELRKSEAKTSAKNKKANEEKANEEKVEESETLEASSEA) form a disordered region.

It belongs to the bacterial ribosomal protein bS16 family.

The sequence is that of Small ribosomal subunit protein bS16 from Prochlorococcus marinus (strain SARG / CCMP1375 / SS120).